The following is a 293-amino-acid chain: tRNA pseudouridine synthase B (293 aa).

Aspartate 39 serves as the catalytic Nucleophile.

Belongs to the pseudouridine synthase TruB family. Type 1 subfamily.

The catalysed reaction is uridine(55) in tRNA = pseudouridine(55) in tRNA. Functionally, responsible for synthesis of pseudouridine from uracil-55 in the psi GC loop of transfer RNAs. The polypeptide is tRNA pseudouridine synthase B (Streptococcus thermophilus (strain CNRZ 1066)).